A 107-amino-acid polypeptide reads, in one-letter code: Ferredoxin-6 (107 aa).

One can recognise a 2Fe-2S ferredoxin-type domain in the interval 2-106; the sequence is AKIIFIEHNG…GLVVHLPEKQ (105 aa). [2Fe-2S] cluster contacts are provided by cysteine 40, cysteine 46, cysteine 49, and cysteine 87.

This sequence belongs to the adrenodoxin/putidaredoxin family. [2Fe-2S] cluster is required as a cofactor.

Functionally, ferredoxins are small electron carrier proteins that participate in various redox reactions. FdVI is an essential protein required for growth of R.capsulatus. May be involved in Fe-S cluster assembly. This Rhodobacter capsulatus (Rhodopseudomonas capsulata) protein is Ferredoxin-6.